Here is a 62-residue protein sequence, read N- to C-terminus: Bacteriocin pediocin PA-1 (62 aa).

Positions 1–18 (MKKIEKLTEKEMANIIGG) are excised as a propeptide. Intrachain disulfides connect cysteine 27/cysteine 32 and cysteine 42/cysteine 62. The interval 40–52 (TTCIINNGAMAWA) is hydrophobic.

The protein belongs to the bacteriocin class IIA/YGNGV family.

The protein resides in the secreted. Its function is as follows. Bactericidal activity (effective inhibitor of L.monocytogenes). The protein is Bacteriocin pediocin PA-1 (pedA) of Pediococcus acidilactici.